A 698-amino-acid polypeptide reads, in one-letter code: Elongation factor G 1 (698 aa).

The tr-type G domain maps to 8–290 (ERYRNIGICA…AVVEFLPAPV (283 aa)). GTP-binding positions include 17 to 24 (AHVDAGKT), 88 to 92 (DTPGH), and 142 to 145 (NKMD).

This sequence belongs to the TRAFAC class translation factor GTPase superfamily. Classic translation factor GTPase family. EF-G/EF-2 subfamily.

It localises to the cytoplasm. Catalyzes the GTP-dependent ribosomal translocation step during translation elongation. During this step, the ribosome changes from the pre-translocational (PRE) to the post-translocational (POST) state as the newly formed A-site-bound peptidyl-tRNA and P-site-bound deacylated tRNA move to the P and E sites, respectively. Catalyzes the coordinated movement of the two tRNA molecules, the mRNA and conformational changes in the ribosome. In Shewanella oneidensis (strain ATCC 700550 / JCM 31522 / CIP 106686 / LMG 19005 / NCIMB 14063 / MR-1), this protein is Elongation factor G 1.